The chain runs to 396 residues: 2,3-diketo-5-methylthiopentyl-1-phosphate enolase (396 aa).

Catalysis depends on K85, which acts as the Proton acceptor. Residues K134, 160-163 (KDDE), H251, G323, and 345-346 (GG) each bind substrate. K160, D162, and E163 together coordinate Mg(2+). Residue K160 is modified to N6-carboxylysine.

It belongs to the RuBisCO large chain family. Type IV subfamily. Homodimer. Mg(2+) serves as cofactor.

The catalysed reaction is 5-methylsulfanyl-2,3-dioxopentyl phosphate = 2-hydroxy-5-methylsulfanyl-3-oxopent-1-enyl phosphate. It functions in the pathway amino-acid biosynthesis; L-methionine biosynthesis via salvage pathway; L-methionine from S-methyl-5-thio-alpha-D-ribose 1-phosphate: step 3/6. Functionally, catalyzes the enolization of 2,3-diketo-5-methylthiopentyl-1-phosphate (DK-MTP-1-P) into 2-hydroxy-3-keto-5-methylthiopentenyl-1-phosphate (HK-MTPenyl-1-P). In Exiguobacterium sibiricum (strain DSM 17290 / CCUG 55495 / CIP 109462 / JCM 13490 / 255-15), this protein is 2,3-diketo-5-methylthiopentyl-1-phosphate enolase.